The sequence spans 295 residues: Pyridoxal 5'-phosphate synthase subunit PdxS (295 aa).

Aspartate 25 is a binding site for D-ribose 5-phosphate. Lysine 82 (schiff-base intermediate with D-ribose 5-phosphate) is an active-site residue. Glycine 154 lines the D-ribose 5-phosphate pocket. Arginine 166 lines the D-glyceraldehyde 3-phosphate pocket. Residues glycine 215 and 236–237 (GS) each bind D-ribose 5-phosphate.

Belongs to the PdxS/SNZ family. As to quaternary structure, in the presence of PdxT, forms a dodecamer of heterodimers.

It carries out the reaction aldehydo-D-ribose 5-phosphate + D-glyceraldehyde 3-phosphate + L-glutamine = pyridoxal 5'-phosphate + L-glutamate + phosphate + 3 H2O + H(+). The protein operates within cofactor biosynthesis; pyridoxal 5'-phosphate biosynthesis. Functionally, catalyzes the formation of pyridoxal 5'-phosphate from ribose 5-phosphate (RBP), glyceraldehyde 3-phosphate (G3P) and ammonia. The ammonia is provided by the PdxT subunit. Can also use ribulose 5-phosphate and dihydroxyacetone phosphate as substrates, resulting from enzyme-catalyzed isomerization of RBP and G3P, respectively. The chain is Pyridoxal 5'-phosphate synthase subunit PdxS from Staphylococcus saprophyticus subsp. saprophyticus (strain ATCC 15305 / DSM 20229 / NCIMB 8711 / NCTC 7292 / S-41).